Here is a 208-residue protein sequence, read N- to C-terminus: Large ribosomal subunit protein uL4 (208 aa).

It belongs to the universal ribosomal protein uL4 family. Part of the 50S ribosomal subunit.

One of the primary rRNA binding proteins, this protein initially binds near the 5'-end of the 23S rRNA. It is important during the early stages of 50S assembly. It makes multiple contacts with different domains of the 23S rRNA in the assembled 50S subunit and ribosome. Functionally, forms part of the polypeptide exit tunnel. The polypeptide is Large ribosomal subunit protein uL4 (Anaplasma marginale (strain Florida)).